A 122-amino-acid chain; its full sequence is Large ribosomal subunit protein uL18 (122 aa).

The interval 1 to 20 is disordered; the sequence is MFKKVSKNANRLSRHQRVRN.

Belongs to the universal ribosomal protein uL18 family. In terms of assembly, part of the 50S ribosomal subunit; part of the 5S rRNA/L5/L18/L25 subcomplex. Contacts the 5S and 23S rRNAs.

This is one of the proteins that bind and probably mediate the attachment of the 5S RNA into the large ribosomal subunit, where it forms part of the central protuberance. The protein is Large ribosomal subunit protein uL18 of Alkaliphilus oremlandii (strain OhILAs) (Clostridium oremlandii (strain OhILAs)).